Here is a 281-residue protein sequence, read N- to C-terminus: Bifunctional protein FolD (281 aa).

Residues 165 to 167 (GRS) and S190 contribute to the NADP(+) site.

This sequence belongs to the tetrahydrofolate dehydrogenase/cyclohydrolase family. Homodimer.

The catalysed reaction is (6R)-5,10-methylene-5,6,7,8-tetrahydrofolate + NADP(+) = (6R)-5,10-methenyltetrahydrofolate + NADPH. It catalyses the reaction (6R)-5,10-methenyltetrahydrofolate + H2O = (6R)-10-formyltetrahydrofolate + H(+). It participates in one-carbon metabolism; tetrahydrofolate interconversion. Functionally, catalyzes the oxidation of 5,10-methylenetetrahydrofolate to 5,10-methenyltetrahydrofolate and then the hydrolysis of 5,10-methenyltetrahydrofolate to 10-formyltetrahydrofolate. The chain is Bifunctional protein FolD from Polaromonas sp. (strain JS666 / ATCC BAA-500).